The chain runs to 925 residues: MGRAGAAANGTPQNVQGITSYQQRITAQHPLPNQSECRKIYRYDGIYCESTYQNLQALRKEKSRDAARSRRGKENFEFYELAKLLPLPAAITSQLDKASIIRLTISYLKMRDFANQGDPPWNLRMEGPPPNTSVKGAQRRRSPSALAIEVFEAHLGSHILQSLDGFVFALNQEGKFLYISETVSIYLGLSQVELTGSSVFDYVHPGDHVEMAEQLGMKLPPGRGLLSQGTTEDAASSASSSSQSETPEPVETTSPSLLTTDNTLERSFFIRMKSTLTKRGVHIKSSGYKVIHITGRLRLRVPLSHGRTVPSQIMGLVVVAHALPPPTINEVRIDCHMFVTRVNMDLNIIYCENRISDYMDLTPVDIVGKRCYHFIHAEDVEGIRHSHLDLLNKGQCVTKYYRWMQKNGGYIWIQSSATIAINAKNANEKNIIWVNYLLSNPEYKDTPMDIAQLPHLPEKASESSETSDSESDSKDTSGITEDNENSKSDEKGNQSENSEDPEPDRKKSGSACDNDMNCNDDGHSSSNPDSRDSDDSFEHSDFEHPKAAEDGFGALGPMQIKVERYVESEADLRLQPCESLTSDSAKDSDSANEAGAQASSKHQKRKRRRKRQKGGSASRRRLSSASSPGLDAGLVEPPRLLSSPHSASVLKIKTEIAEPINFDNESSIWNYPPNREISRNESPYSMTKPPTSEHFPSPQGQGGSIGGGGALHVAIPDSVLTPPGADGTAGRKTQFSGTAPVPSDPLSPPLSASPRDKHPGGGAGSGGGGPGASNSLLYTGDLEALQRLQAGNVVLPLVHRVTGTLAATSTAAQRVYTTGTIRYAPAEVTLAMQGNLLPNAHAVNFVDVNSPGFGLDPKTPMEMLYHHVHRLNMSGPFGGAVSAASLTQMPGGNVFTTAEGLFSTLPFPVYSNGIHAAQTLERKED.

Positions L58–R111 constitute a bHLH domain. The segment at K60–R71 is DNA-binding. Disordered stretches follow at residues P119–Q138 and L219–L257. The PAS 1 domain occupies E152 to G222. Residues A234 to S256 show a composition bias toward low complexity. The PAS 2 domain maps to P324 to G394. Residues T398–P441 form the PAC domain. Disordered stretches follow at residues P457–L555, P576–H645, and N664–N774. 2 stretches are compositionally biased toward basic and acidic residues: residues E484–N493 and D529–E549. A compositionally biased stretch (basic residues) spans K601–L622. A compositionally biased stretch (polar residues) spans N680–P690. 2 stretches are compositionally biased toward gly residues: residues G700 to A710 and G760 to G771.

As to quaternary structure, efficient DNA binding requires dimerization with another bHLH protein. Interacts with ARNT; forms a heterodimer that binds core DNA sequence 5'-[AG]CGTG-3' within the hypoxia response element (HRE) of target gene promoters. As to expression, detected exclusively in adult brain in inhibitory interneurons.

The protein resides in the nucleus. Its function is as follows. May play a broad role in neurogenesis. May control regulatory pathways relevant to schizophrenia and to psychotic illness. The sequence is that of Neuronal PAS domain-containing protein 3 (Npas3) from Mus musculus (Mouse).